We begin with the raw amino-acid sequence, 218 residues long: GTP cyclohydrolase 1 (218 aa).

Zn(2+)-binding residues include cysteine 109, histidine 112, and cysteine 180.

The protein belongs to the GTP cyclohydrolase I family. Toroid-shaped homodecamer, composed of two pentamers of five dimers.

The catalysed reaction is GTP + H2O = 7,8-dihydroneopterin 3'-triphosphate + formate + H(+). It participates in cofactor biosynthesis; 7,8-dihydroneopterin triphosphate biosynthesis; 7,8-dihydroneopterin triphosphate from GTP: step 1/1. The protein is GTP cyclohydrolase 1 of Aeromonas salmonicida (strain A449).